Here is a 311-residue protein sequence, read N- to C-terminus: Taste receptor type 2 member 9 (311 aa).

The Extracellular portion of the chain corresponds to 1-9 (MPSTIEAIY). The helical transmembrane segment at 10–32 (IILIAGELTIGIWGNGFIVLVNC) threads the bilayer. Topologically, residues 33-52 (IDWLKRRDVSLIDIILISLA) are cytoplasmic. A helical membrane pass occupies residues 53-72 (ISRICLLCVISLDGFFILLF). The Extracellular segment spans residues 73–86 (PGTYDINVLESIMD). A helical transmembrane segment spans residues 87–109 (AVWTFANNSSLWFTSCLSIFYLL). At 110-128 (KIANISHPFFFWLKLKINK) the chain is on the cytoplasmic side. Residues 129–146 (VILAILLGSFLISLIISF) traverse the membrane as a helical segment. The Extracellular portion of the chain corresponds to 147 to 179 (PINGXWYHLFKVSHEENITWAFKVSTIPGAFKQ). Asn-163 carries N-linked (GlcNAc...) asparagine glycosylation. The chain crosses the membrane as a helical span at residues 180–202 (LTLNLGAMVPFMLCLISFFLLLF). The Cytoplasmic segment spans residues 203–233 (SLVRHTKQIQLHATGLRDPSTEAHMRAIKAV). The helical transmembrane segment at 234–256 (IIFLLLLIVYYPVFLVMTSSTLI) threads the bilayer. The Extracellular segment spans residues 257-260 (PQGK). Residues 261–283 (LVLMIGDIVTVIFPSSHSFILIM) form a helical membrane-spanning segment. Residues 284-311 (GNSKLREAFLKMLRFVKGFLRRRKPFGP) lie on the Cytoplasmic side of the membrane.

Belongs to the G-protein coupled receptor T2R family.

The protein resides in the membrane. Functionally, gustducin-coupled receptor implicated in the perception of bitter compounds in the oral cavity and the gastrointestinal tract. Signals through PLCB2 and the calcium-regulated cation channel TRPM5. This is Taste receptor type 2 member 9 (TAS2R9) from Papio hamadryas (Hamadryas baboon).